The chain runs to 252 residues: Carbohydrate deacetylase (252 aa).

Mg(2+) contacts are provided by histidine 59 and histidine 122.

It belongs to the YdjC deacetylase family. In terms of assembly, homodimer. It depends on Mg(2+) as a cofactor.

In terms of biological role, probably catalyzes the deacetylation of acetylated carbohydrates an important step in the degradation of oligosaccharides. In Vibrio vulnificus (strain YJ016), this protein is Carbohydrate deacetylase.